A 318-amino-acid chain; its full sequence is Trans-prenyltransferase (318 aa).

The helical transmembrane segment at 1–21 (MLHLIYISIIVVLIIILISYT) threads the bilayer. Isopentenyl diphosphate-binding residues include Lys85, Arg88, and His122. Positions 129 and 135 each coordinate Mg(2+). Residue Arg140 coordinates dimethylallyl diphosphate. An isopentenyl diphosphate-binding site is contributed by Arg141. Dimethylallyl diphosphate is bound by residues Lys216, Thr217, and Gln254.

Belongs to the FPP/GGPP synthase family. Asfivirus trans-prenyltransferase subfamily. The cofactor is Mg(2+).

The protein resides in the host endoplasmic reticulum. It localises to the host membrane. The enzyme catalyses isopentenyl diphosphate + dimethylallyl diphosphate = (2E)-geranyl diphosphate + diphosphate. The catalysed reaction is isopentenyl diphosphate + (2E)-geranyl diphosphate = (2E,6E)-farnesyl diphosphate + diphosphate. It carries out the reaction isopentenyl diphosphate + (2E,6E)-farnesyl diphosphate = (2E,6E,10E)-geranylgeranyl diphosphate + diphosphate. It catalyses the reaction isopentenyl diphosphate + (2E,6E,10E)-geranylgeranyl diphosphate = (2E,6E,10E,14E)-geranylfarnesyl diphosphate + diphosphate. The protein operates within isoprenoid biosynthesis; farnesyl diphosphate biosynthesis; farnesyl diphosphate from geranyl diphosphate and isopentenyl diphosphate: step 1/1. It participates in isoprenoid biosynthesis; geranyl diphosphate biosynthesis; geranyl diphosphate from dimethylallyl diphosphate and isopentenyl diphosphate: step 1/1. Its pathway is isoprenoid biosynthesis; geranylgeranyl diphosphate biosynthesis; geranylgeranyl diphosphate from farnesyl diphosphate and isopentenyl diphosphate: step 1/1. Its function is as follows. Trans-prenyltransferase that catalyzes the sequential condensation of isopentenyl diphosphate (IPP) with different allylic diphosphates, such as dimethylallyl diphosphate (DMAPP), geranyl diphosphate (GPP), farnesyl diphosphate (FPP) and geranylgeranyl diphosphate (GGPP), farnesyl diphosphate being the best allylic substrate. The protein is Trans-prenyltransferase of Ornithodoros (relapsing fever ticks).